A 602-amino-acid polypeptide reads, in one-letter code: Threonine--tRNA ligase (602 aa).

A catalytic region spans residues 208–499 (DHRKLGTELK…LTEHCAGEFP (292 aa)). Zn(2+) contacts are provided by Cys-300, His-351, and His-476.

The protein belongs to the class-II aminoacyl-tRNA synthetase family. As to quaternary structure, homodimer. Zn(2+) is required as a cofactor.

The protein resides in the cytoplasm. It carries out the reaction tRNA(Thr) + L-threonine + ATP = L-threonyl-tRNA(Thr) + AMP + diphosphate + H(+). Catalyzes the attachment of threonine to tRNA(Thr) in a two-step reaction: L-threonine is first activated by ATP to form Thr-AMP and then transferred to the acceptor end of tRNA(Thr). Also edits incorrectly charged L-seryl-tRNA(Thr). The polypeptide is Threonine--tRNA ligase (Campylobacter jejuni subsp. jejuni serotype O:23/36 (strain 81-176)).